A 264-amino-acid polypeptide reads, in one-letter code: Undecaprenyl-diphosphatase 2 (264 aa).

7 helical membrane-spanning segments follow: residues Gly-29–Trp-49, Ser-77–Leu-97, Leu-107–Phe-127, Ala-137–Val-157, Phe-180–Leu-200, Val-212–Met-232, and Phe-243–Leu-263.

The protein belongs to the UppP family.

It is found in the cell inner membrane. It carries out the reaction di-trans,octa-cis-undecaprenyl diphosphate + H2O = di-trans,octa-cis-undecaprenyl phosphate + phosphate + H(+). Catalyzes the dephosphorylation of undecaprenyl diphosphate (UPP). Confers resistance to bacitracin. The sequence is that of Undecaprenyl-diphosphatase 2 from Mesorhizobium japonicum (strain LMG 29417 / CECT 9101 / MAFF 303099) (Mesorhizobium loti (strain MAFF 303099)).